Reading from the N-terminus, the 237-residue chain is Demethylmenaquinone methyltransferase (237 aa).

Residues Thr58, Asp79, and 106 to 107 (NA) contribute to the S-adenosyl-L-methionine site.

Belongs to the class I-like SAM-binding methyltransferase superfamily. MenG/UbiE family.

The catalysed reaction is a 2-demethylmenaquinol + S-adenosyl-L-methionine = a menaquinol + S-adenosyl-L-homocysteine + H(+). It participates in quinol/quinone metabolism; menaquinone biosynthesis; menaquinol from 1,4-dihydroxy-2-naphthoate: step 2/2. In terms of biological role, methyltransferase required for the conversion of demethylmenaquinol (DMKH2) to menaquinol (MKH2). The chain is Demethylmenaquinone methyltransferase from Listeria innocua serovar 6a (strain ATCC BAA-680 / CLIP 11262).